A 203-amino-acid polypeptide reads, in one-letter code: Glycerol-3-phosphate acyltransferase (203 aa).

Transmembrane regions (helical) follow at residues 3–23 (ILLATVAAYLIGSVSFAVVVS), 51–71 (KAAILTLVGDAFKGWLAVWLV), 74–94 (FGIGGEIGVALAAIAVFLGHL), 116–136 (AVHPVLGLATALTWLIVAFFF), 140–160 (SLAALVAAVFAPIFDVFLFGT), and 164–178 (PVAWAVLAMSVLLIW).

This sequence belongs to the PlsY family. Probably interacts with PlsX.

The protein localises to the cell inner membrane. The enzyme catalyses an acyl phosphate + sn-glycerol 3-phosphate = a 1-acyl-sn-glycero-3-phosphate + phosphate. It functions in the pathway lipid metabolism; phospholipid metabolism. Its function is as follows. Catalyzes the transfer of an acyl group from acyl-phosphate (acyl-PO(4)) to glycerol-3-phosphate (G3P) to form lysophosphatidic acid (LPA). This enzyme utilizes acyl-phosphate as fatty acyl donor, but not acyl-CoA or acyl-ACP. This chain is Glycerol-3-phosphate acyltransferase, found in Burkholderia mallei (strain ATCC 23344).